We begin with the raw amino-acid sequence, 239 residues long: Ribosomal RNA small subunit methyltransferase G (239 aa).

S-adenosyl-L-methionine is bound by residues Gly77, Phe82, 128–129 (AE), and Arg146. Residues 216–239 (KRRQTSKKYPRKPGTPNKSPLVES) form a disordered region.

This sequence belongs to the methyltransferase superfamily. RNA methyltransferase RsmG family.

It is found in the cytoplasm. In terms of biological role, specifically methylates the N7 position of guanine in position 535 of 16S rRNA. The sequence is that of Ribosomal RNA small subunit methyltransferase G from Staphylococcus epidermidis (strain ATCC 35984 / DSM 28319 / BCRC 17069 / CCUG 31568 / BM 3577 / RP62A).